The sequence spans 381 residues: MIRKIPSFIEVYKSLIQIPTISSNNKLLDQSNKNFIDLLSNYFSDLNFSVKNYQIPHTDKYNMLACVGSGNGGLLLSGHSDTVDFDEKKWTKDPFKLTETNNKFYGLGAVDMKGFFALILEVISSINIKKINKPIYILATANEETDMSGARNFIQSTIIKPDCIIIGEPTSLKLINAHKGHMSYSIKVIGDTGHSSNPDHGVNSIEIMHDVIRSLLILKKYFKEEYQHPNFSIPYPTMNLSSIHGGSAINRICPLCILNFEIRPIPGLTLTQIEIVIKEKLETIMKKWSHRIFIKKLFSSVPAYECPHNSGTIKIVEKLCQLNSAAVNYCTEAPFLQRIAPTLILGPGSIEQAHQPDEYLEHYFIQPTKNIITKLINKFCY.

H79 contributes to the Zn(2+) binding site. The active site involves D81. D111 contacts Zn(2+). The active site involves E143. Zn(2+) contacts are provided by E144, E168, and H354.

Belongs to the peptidase M20A family. ArgE subfamily. In terms of assembly, homodimer. Requires Zn(2+) as cofactor. Co(2+) serves as cofactor. The cofactor is glutathione.

The protein resides in the cytoplasm. It catalyses the reaction N(2)-acetyl-L-ornithine + H2O = L-ornithine + acetate. Its pathway is amino-acid biosynthesis; L-arginine biosynthesis; L-ornithine from N(2)-acetyl-L-ornithine (linear): step 1/1. Its function is as follows. Catalyzes the hydrolysis of the amide bond of N(2)-acetylated L-amino acids. Cleaves the acetyl group from N-acetyl-L-ornithine to form L-ornithine, an intermediate in L-arginine biosynthesis pathway, and a branchpoint in the synthesis of polyamines. In Buchnera aphidicola subsp. Acyrthosiphon pisum (strain APS) (Acyrthosiphon pisum symbiotic bacterium), this protein is Acetylornithine deacetylase.